Reading from the N-terminus, the 107-residue chain is Large ribosomal subunit protein uL24 (107 aa).

It belongs to the universal ribosomal protein uL24 family. In terms of assembly, part of the 50S ribosomal subunit.

In terms of biological role, one of two assembly initiator proteins, it binds directly to the 5'-end of the 23S rRNA, where it nucleates assembly of the 50S subunit. Functionally, one of the proteins that surrounds the polypeptide exit tunnel on the outside of the subunit. This is Large ribosomal subunit protein uL24 from Gluconacetobacter diazotrophicus (strain ATCC 49037 / DSM 5601 / CCUG 37298 / CIP 103539 / LMG 7603 / PAl5).